The chain runs to 102 residues: Cuticle protein AM/CP1114 (102 aa).

Positions 16–81 (DGNFHYSFET…VESPLLPSIP (66 aa)) constitute a Chitin-binding type R&amp;R domain. Polar residues predominate over residues 23-33 (FETSNGIQDTK). Residues 23-50 (FETSNGIQDTKTGVPGSAGQSNMNGDFS) are disordered.

Arthrodial membrane and calcified shell.

The sequence is that of Cuticle protein AM/CP1114 from Cancer pagurus (Rock crab).